The sequence spans 37 residues: Large ribosomal subunit protein bL36c (37 aa).

Belongs to the bacterial ribosomal protein bL36 family.

It localises to the plastid. It is found in the organellar chromatophore. The polypeptide is Large ribosomal subunit protein bL36c (Paulinella chromatophora).